A 1069-amino-acid chain; its full sequence is Carbamoyl phosphate synthase large chain (1069 aa).

The tract at residues 1 to 401 (MPLNKDIKKV…AFLKGIRSLE (401 aa)) is carboxyphosphate synthetic domain. Positions 129, 169, 175, 176, 208, 210, 215, 241, 242, 243, 284, and 298 each coordinate ATP. The 195-residue stretch at 133–327 (RDMMNRIGEP…IAKLAAKIAL (195 aa)) folds into the ATP-grasp 1 domain. Residues Gln284, Glu298, and Asn300 each coordinate Mg(2+). 3 residues coordinate Mn(2+): Gln284, Glu298, and Asn300. The segment at 402–549 (IGKYSLDHNK…YSTYEQYDEV (148 aa)) is oligomerization domain. The carbamoyl phosphate synthetic domain stretch occupies residues 550–932 (EVSNNKKVIV…ALYKGFVGAY (383 aa)). In terms of domain architecture, ATP-grasp 2 spans 674–864 (DELLERLGIS…IVDLATQVML (191 aa)). ATP contacts are provided by Arg710, Lys749, Leu751, Glu755, Gly780, Val781, His782, Ser783, Gln823, and Glu835. Mg(2+)-binding residues include Gln823, Glu835, and Asn837. Residues Gln823, Glu835, and Asn837 each coordinate Mn(2+). An MGS-like domain is found at 932–1069 (YMYPSKEKGK…KDLEVFNIAK (138 aa)). Residues 933-1069 (MYPSKEKGKI…KDLEVFNIAK (137 aa)) form an allosteric domain region.

It belongs to the CarB family. As to quaternary structure, composed of two chains; the small (or glutamine) chain promotes the hydrolysis of glutamine to ammonia, which is used by the large (or ammonia) chain to synthesize carbamoyl phosphate. Tetramer of heterodimers (alpha,beta)4. Mg(2+) is required as a cofactor. Mn(2+) serves as cofactor.

It carries out the reaction hydrogencarbonate + L-glutamine + 2 ATP + H2O = carbamoyl phosphate + L-glutamate + 2 ADP + phosphate + 2 H(+). It catalyses the reaction hydrogencarbonate + NH4(+) + 2 ATP = carbamoyl phosphate + 2 ADP + phosphate + 2 H(+). It functions in the pathway amino-acid biosynthesis; L-arginine biosynthesis; carbamoyl phosphate from bicarbonate: step 1/1. The protein operates within pyrimidine metabolism; UMP biosynthesis via de novo pathway; (S)-dihydroorotate from bicarbonate: step 1/3. In terms of biological role, large subunit of the glutamine-dependent carbamoyl phosphate synthetase (CPSase). CPSase catalyzes the formation of carbamoyl phosphate from the ammonia moiety of glutamine, carbonate, and phosphate donated by ATP, constituting the first step of 2 biosynthetic pathways, one leading to arginine and/or urea and the other to pyrimidine nucleotides. The large subunit (synthetase) binds the substrates ammonia (free or transferred from glutamine from the small subunit), hydrogencarbonate and ATP and carries out an ATP-coupled ligase reaction, activating hydrogencarbonate by forming carboxy phosphate which reacts with ammonia to form carbamoyl phosphate. In Clostridium beijerinckii (strain ATCC 51743 / NCIMB 8052) (Clostridium acetobutylicum), this protein is Carbamoyl phosphate synthase large chain.